Reading from the N-terminus, the 241-residue chain is Pyridoxal phosphate phosphatase PHOSPHO2 (241 aa).

D8 serves as the catalytic Nucleophile. Positions 8 and 10 each coordinate Mg(2+). The active-site Proton donor is D10. Substrate-binding residues include D19 and D99. D179 is a binding site for Mg(2+).

Belongs to the HAD-like hydrolase superfamily. PHOSPHO family. Mg(2+) is required as a cofactor.

It carries out the reaction pyridoxal 5'-phosphate + H2O = pyridoxal + phosphate. Its function is as follows. Phosphatase that has high activity toward pyridoxal 5'-phosphate (PLP). Also active at much lower level toward pyrophosphate, phosphoethanolamine (PEA), phosphocholine (PCho), phospho-l-tyrosine, fructose-6-phosphate, p-nitrophenyl phosphate, and h-glycerophosphate. The protein is Pyridoxal phosphate phosphatase PHOSPHO2 (PHOSPHO2) of Bos taurus (Bovine).